The primary structure comprises 735 residues: Translation initiation factor IF-2 (735 aa).

Composition is skewed to basic and acidic residues over residues 52–66 and 101–117; these read VNSEKKAEKKTEKPK and KGKETKKTEAQQQEKKL. A disordered region spans residues 52 to 154; sequence VNSEKKAEKK…PAKKEKELPK (103 aa). The span at 121-133 shows a compositional bias: basic residues; sequence AKKKGKGPMKGKK. Low complexity predominate over residues 134-145; it reads QAAPASKQAQQP. A tr-type G domain is found at 236 to 405; the sequence is ERPPVVTIMG…LLVSEMEELK (170 aa). Positions 245–252 are G1; it reads GHVDHGKT. GTP is bound at residue 245–252; that stretch reads GHVDHGKT. A G2 region spans residues 270–274; it reads GITQH. Positions 291–294 are G3; the sequence is DTPG. GTP is bound by residues 291–295 and 345–348; these read DTPGH and NKMD. Positions 345–348 are G4; the sequence is NKMD. The interval 381–383 is G5; it reads SAK.

The protein belongs to the TRAFAC class translation factor GTPase superfamily. Classic translation factor GTPase family. IF-2 subfamily.

It localises to the cytoplasm. Its function is as follows. One of the essential components for the initiation of protein synthesis. Protects formylmethionyl-tRNA from spontaneous hydrolysis and promotes its binding to the 30S ribosomal subunits. Also involved in the hydrolysis of GTP during the formation of the 70S ribosomal complex. This chain is Translation initiation factor IF-2, found in Geobacillus thermodenitrificans (strain NG80-2).